Here is a 211-residue protein sequence, read N- to C-terminus: tRNA (guanine-N(7)-)-methyltransferase (211 aa).

S-adenosyl-L-methionine-binding residues include glutamate 44, aspartate 69, aspartate 96, and aspartate 118. Aspartate 118 is a catalytic residue. Lysine 122 serves as a coordination point for substrate. The interval 124–129 (KHEKRR) is interaction with RNA. Residues aspartate 154 and 191-194 (TEYE) contribute to the substrate site.

It belongs to the class I-like SAM-binding methyltransferase superfamily. TrmB family.

The enzyme catalyses guanosine(46) in tRNA + S-adenosyl-L-methionine = N(7)-methylguanosine(46) in tRNA + S-adenosyl-L-homocysteine. It functions in the pathway tRNA modification; N(7)-methylguanine-tRNA biosynthesis. Catalyzes the formation of N(7)-methylguanine at position 46 (m7G46) in tRNA. The polypeptide is tRNA (guanine-N(7)-)-methyltransferase (Streptococcus pyogenes serotype M12 (strain MGAS2096)).